The chain runs to 259 residues: Trypsin (259 aa).

The N-terminal stretch at Met1–Ala32 is a signal peptide. Positions Ala33–Pro36 are cleaved as a propeptide — activation peptide. The region spanning Val37 to Arg257 is the Peptidase S1 domain. Cysteines 58 and 74 form a disulfide. Catalysis depends on charge relay system residues His73 and Asp118. Disulfide bonds link Cys177-Cys192 and Cys204-Cys233. Ser208 serves as the catalytic Charge relay system.

It belongs to the peptidase S1 family.

The enzyme catalyses Preferential cleavage: Arg-|-Xaa, Lys-|-Xaa.. The chain is Trypsin (sprT) from Streptomyces griseus.